The sequence spans 475 residues: Ribulose bisphosphate carboxylase large chain (475 aa).

The substrate site is built by Asn123 and Thr173. Lys175 (proton acceptor) is an active-site residue. Lys177 is a substrate binding site. Positions 201, 203, and 204 each coordinate Mg(2+). Lys201 carries the post-translational modification N6-carboxylysine. Residue His294 is the Proton acceptor of the active site. Residues Arg295, His327, and Ser379 each contribute to the substrate site.

The protein belongs to the RuBisCO large chain family. Type I subfamily. As to quaternary structure, heterohexadecamer of 8 large chains and 8 small chains. Mg(2+) serves as cofactor.

The protein resides in the plastid. Its subcellular location is the chloroplast. The catalysed reaction is 2 (2R)-3-phosphoglycerate + 2 H(+) = D-ribulose 1,5-bisphosphate + CO2 + H2O. It catalyses the reaction D-ribulose 1,5-bisphosphate + O2 = 2-phosphoglycolate + (2R)-3-phosphoglycerate + 2 H(+). RuBisCO catalyzes two reactions: the carboxylation of D-ribulose 1,5-bisphosphate, the primary event in carbon dioxide fixation, as well as the oxidative fragmentation of the pentose substrate in the photorespiration process. Both reactions occur simultaneously and in competition at the same active site. The chain is Ribulose bisphosphate carboxylase large chain from Bigelowiella natans (Pedinomonas minutissima).